The sequence spans 744 residues: Cytosolic neutral trehalase (744 aa).

Asp99, Asp101, Asn103, Gln105, and Asp110 together coordinate Ca(2+). Residues Arg286, 293–294 (WD), Asn330, 339–341 (RSQ), Glu406, Arg455, and Gly458 contribute to the substrate site. Catalysis depends on proton donor/acceptor residues Asp460 and Glu665.

Belongs to the glycosyl hydrolase 37 family. Ca(2+) is required as a cofactor.

The protein resides in the cytoplasm. The catalysed reaction is alpha,alpha-trehalose + H2O = alpha-D-glucose + beta-D-glucose. Its pathway is carbohydrate degradation. Functionally, hydrolyzes intracellular trehalose to glucose. The polypeptide is Cytosolic neutral trehalase (Neurospora crassa (strain ATCC 24698 / 74-OR23-1A / CBS 708.71 / DSM 1257 / FGSC 987)).